We begin with the raw amino-acid sequence, 358 residues long: Mesaconyl-CoA hydratase (358 aa).

The protein belongs to the enoyl-CoA hydratase/isomerase family. In terms of assembly, homodimer.

It catalyses the reaction (2R,3S)-beta-methylmalyl-CoA = 2-methylfumaryl-CoA + H2O. Its activity is regulated as follows. Shows highest activity at 0.5 M KCl. Does not require divalent ions for activity. Its function is as follows. Involved in the methylaspartate cycle. Catalyzes the reversible hydration of mesaconyl-CoA (2-methylfumaryl-CoA) to yield beta-methylmalyl-CoA ((2R,3S)-beta-methylmalyl-CoA). Also shows activity with mesaconyl-C4-CoA (3-methylfumaryl-CoA), (S)-citramalyl-CoA and (S)-malyl-CoA. This chain is Mesaconyl-CoA hydratase, found in Haloarcula hispanica (strain ATCC 33960 / DSM 4426 / JCM 8911 / NBRC 102182 / NCIMB 2187 / VKM B-1755).